The sequence spans 206 residues: Insecticyanin-B (206 aa).

The N-terminal stretch at 1-17 (MQRFLVFTIVAVATAAA) is a signal peptide. 2 cysteine pairs are disulfide-bonded: Cys26–Cys136 and Cys60–Cys192.

The protein belongs to the calycin superfamily. Lipocalin family. As to quaternary structure, homotetramer. As to expression, synthesized only in the caterpillars, apparently by the epidermis and secreted into the hemolymph. The protein is passed over from the larval hemolymph to that of pupae and adults and is sequestered in the eggs.

The protein localises to the secreted. In terms of biological role, this protein binds a chromophore: biliverdin IX, isomer gamma. Mixed with lipoprotein-bound carotenes, this blue protein provides hornworms with their green cryptic coloration which serves a camouflage. This chain is Insecticyanin-B (INSB), found in Manduca sexta (Tobacco hawkmoth).